The primary structure comprises 407 residues: 4-hydroxybenzoate polyprenyltransferase, mitochondrial (407 aa).

The transit peptide at 1–20 (MAFFGLSRVSRRLLKSSVSV) directs the protein to the mitochondrion. A run of 6 helical transmembrane segments spans residues 137–157 (IGTW…ADPG), 162–182 (FKYM…GCTI), 210–230 (FQGI…LLQL), 254–274 (FTFW…LLGW), 279–299 (GSIA…WTLV), and 330–350 (LWLT…GFSA).

This sequence belongs to the UbiA prenyltransferase family. Requires Mg(2+) as cofactor. Expressed in flowers.

The protein resides in the mitochondrion inner membrane. The catalysed reaction is an all-trans-polyprenyl diphosphate + 4-hydroxybenzoate = a 4-hydroxy-3-(all-trans-polyprenyl)benzoate + diphosphate. It functions in the pathway cofactor biosynthesis; ubiquinone biosynthesis. In terms of biological role, catalyzes the prenylation of para-hydroxybenzoate (PHB) with an all-trans polyprenyl group. Mediates the second step in the final reaction sequence of coenzyme Q (CoQ) biosynthesis, which is the condensation of the polyisoprenoid side chain with PHB, generating the first membrane-bound Q intermediate. Required for embryo development. In Arabidopsis thaliana (Mouse-ear cress), this protein is 4-hydroxybenzoate polyprenyltransferase, mitochondrial.